We begin with the raw amino-acid sequence, 391 residues long: ATP phosphoribosyltransferase regulatory subunit (391 aa).

The protein belongs to the class-II aminoacyl-tRNA synthetase family. HisZ subfamily. As to quaternary structure, heteromultimer composed of HisG and HisZ subunits.

The protein resides in the cytoplasm. Its pathway is amino-acid biosynthesis; L-histidine biosynthesis; L-histidine from 5-phospho-alpha-D-ribose 1-diphosphate: step 1/9. Required for the first step of histidine biosynthesis. May allow the feedback regulation of ATP phosphoribosyltransferase activity by histidine. The protein is ATP phosphoribosyltransferase regulatory subunit of Bacillus pumilus (strain SAFR-032).